The primary structure comprises 655 residues: p-hydroxybenzoic acid efflux pump subunit AaeB (655 aa).

The Periplasmic portion of the chain corresponds to 1-12 (MGIFSIANQHIR). The chain crosses the membrane as a helical span at residues 13-33 (FAVKLATAIVLALFVGFHFQL). Residues 34–37 (ETPR) are Cytoplasmic-facing. Residues 38–58 (WAVLTAAIVAAGTAFAAGGEP) traverse the membrane as a helical segment. At 59–68 (YSGAIRYRGF) the chain is on the periplasmic side. Residues 69–89 (LRIIGTFIGCIAGLVIIIAMI) form a helical membrane-spanning segment. Residues 90–92 (RAP) are Cytoplasmic-facing. Residues 93 to 113 (LLMILVCCIWAGFCTWISSLV) form a helical membrane-spanning segment. The Periplasmic portion of the chain corresponds to 114 to 120 (RIENSYA). Residues 121-141 (WGLAGYTALIIVITIQPEPLL) traverse the membrane as a helical segment. The Cytoplasmic segment spans residues 142-151 (TPQFAVERCS). Residues 152 to 172 (EIVIGIVCAIMADLLFSPRSI) form a helical membrane-spanning segment. Residues 173–369 (KQEVDRELES…RTTLSCILGT (197 aa)) are Periplasmic-facing. A helical transmembrane segment spans residues 370–390 (LFWLWTGWTSGSGAMVMIAVV). The Cytoplasmic segment spans residues 391 to 406 (TSLAMRLPNPRMVAID). A helical transmembrane segment spans residues 407 to 427 (FIYGTLAALPLGLLYFLVIIP). Residues 428–430 (NTQ) lie on the Periplasmic side of the membrane. Residues 431-451 (QSMLLLCISLAVLGFFLGIEV) form a helical membrane-spanning segment. Residues 452–458 (QKRRLGS) are Cytoplasmic-facing. The helical transmembrane segment at 459-479 (MGALASTINIIVLDNPMTFHF) threads the bilayer. The Periplasmic portion of the chain corresponds to 480-481 (SQ). A helical transmembrane segment spans residues 482-502 (FLDSALGQIVGCVLAFTVILL). Residues 503–655 (VRDKSRDRTG…HKYQHALTDS (153 aa)) are Cytoplasmic-facing.

Belongs to the aromatic acid exporter ArAE (TC 2.A.85) family.

The protein localises to the cell inner membrane. Functionally, forms an efflux pump with AaeA. Could function as a metabolic relief valve, allowing to eliminate certain compounds when they accumulate to high levels in the cell. Substrates are p-hydroxybenzoic acid (pHBA), 6-hydroxy-2-naphthoic and 2-hydroxycinnamate. The protein is p-hydroxybenzoic acid efflux pump subunit AaeB of Escherichia coli (strain K12).